The sequence spans 482 residues: Glutamate--tRNA ligase 2 (482 aa).

Positions 8–18 (PSPTGQLHIGG) match the 'HIGH' region motif. Residues 249–253 (KLSKR) carry the 'KMSKS' region motif. Lys-252 is a binding site for ATP.

Belongs to the class-I aminoacyl-tRNA synthetase family. Glutamate--tRNA ligase type 1 subfamily. As to quaternary structure, monomer.

The protein localises to the cytoplasm. The enzyme catalyses tRNA(Glu) + L-glutamate + ATP = L-glutamyl-tRNA(Glu) + AMP + diphosphate. Catalyzes the attachment of glutamate to tRNA(Glu) in a two-step reaction: glutamate is first activated by ATP to form Glu-AMP and then transferred to the acceptor end of tRNA(Glu). The polypeptide is Glutamate--tRNA ligase 2 (Caldicellulosiruptor saccharolyticus (strain ATCC 43494 / DSM 8903 / Tp8T 6331)).